A 291-amino-acid polypeptide reads, in one-letter code: DegV domain-containing protein CPE0026 (291 aa).

Positions 4 to 286 (FVIFTDSAAD…IGTLAVFFLG (283 aa)) constitute a DegV domain. Hexadecanoate is bound by residues T63 and S95.

May bind long-chain fatty acids, such as palmitate, and may play a role in lipid transport or fatty acid metabolism. The chain is DegV domain-containing protein CPE0026 from Clostridium perfringens (strain 13 / Type A).